The chain runs to 975 residues: Ionotropic receptor 21a (975 aa).

The first 21 residues, 1–21 (MFKRIVLAVINLVFLIVSTTA), serve as a signal peptide directing secretion. N-linked (GlcNAc...) asparagine glycans are attached at residues Asn-67, Asn-177, and Asn-355. A helical transmembrane segment spans residues 433-453 (WPVWVAVILIYLLAIFPLAFS). Asn-464 carries an N-linked (GlcNAc...) asparagine glycan. The helical transmembrane segment at 505–525 (IYWVFTIIITACYTGSIIAFI) threads the bilayer. N-linked (GlcNAc...) asparagine glycans are attached at residues Asn-561, Asn-586, and Asn-611. The helical transmembrane segment at 708–728 (MFLLMLFGYVVALGVLISEWV) threads the bilayer. 2 disordered regions span residues 757–839 (ATAG…HSLS) and 911–938 (SPHSARADESSDAGGLVRRGAGRERKEM). 2 stretches are compositionally biased toward polar residues: residues 760-777 (GSDNGSLPVSSPTSTNRN) and 788-800 (VENSLPASGNGSA). Residues Asn-763 and Asn-797 are each glycosylated (N-linked (GlcNAc...) asparagine).

The protein belongs to the glutamate-gated ion channel (TC 1.A.10.1) family. In terms of tissue distribution, in both female and male antenna, expressed specifically in 3 sensory neurons of flagellomere 13 segment (at protein level).

It localises to the cell projection. The protein localises to the cilium membrane. In terms of biological role, integral part of a neural sensory system in the antenna that provides the neural basis for the response to environmental changes in temperature (thermosensation). Specifically, required for thermosensing by the cooling cell. Plays a role in heat seeking and heat-stimulated blood feeding behavior. This chain is Ionotropic receptor 21a, found in Anopheles gambiae (African malaria mosquito).